Here is a 425-residue protein sequence, read N- to C-terminus: Orexin/Hypocretin receptor type 1 (425 aa).

The disordered stretch occupies residues 1–24 (MEPSATPGAQMGVPPGSREPSPVP). The Extracellular portion of the chain corresponds to 1–46 (MEPSATPGAQMGVPPGSREPSPVPPDYEDEFLRYLWRDYLYPKQYE). A required for response to orexin-A region spans residues 26-41 (DYEDEFLRYLWRDYLY). A helical transmembrane segment spans residues 47-67 (WVLIAAYVAVFVVALVGNTLV). Residues 68 to 82 (CLAVWRNHHMRTVTN) lie on the Cytoplasmic side of the membrane. The helical transmembrane segment at 83-105 (YFIVNLSLADVLVTAICLPASLL) threads the bilayer. At 106-119 (VDITESWLFGHALC) the chain is on the extracellular side. Cysteine 119 and cysteine 202 form a disulfide bridge. The helical transmembrane segment at 120 to 140 (KVIPYLQAVSVSVAVLTLSFI) threads the bilayer. At 141–160 (ALDRWYAICHPLLFKSTARR) the chain is on the cytoplasmic side. The chain crosses the membrane as a helical span at residues 161-182 (ARGSILGIWAVSLAIMVPQAAV). Over 183–213 (MECSSVLPELANRTRLFSVCDERWADDLYPK) the chain is Extracellular. N-linked (GlcNAc...) asparagine glycosylation occurs at asparagine 194. Residues 214–235 (IYHSCFFIVTYLAPLGLMAMAY) traverse the membrane as a helical segment. Topologically, residues 236-298 (FQIFRKLWGR…QMRARRKTAK (63 aa)) are cytoplasmic. The chain crosses the membrane as a helical span at residues 299–321 (MLMVVLLVFALCYLPISVLNVLK). Asparagine 318 provides a ligand contact to suvorexant. At 322-336 (RVFGMFRQASDREAV) the chain is on the extracellular side. A helical membrane pass occupies residues 337–360 (YACFTFSHWLVYANSAANPIIYNF). At 361-425 (LSGKFREQFK…VLTSVTTVLP (65 aa)) the chain is on the cytoplasmic side.

Belongs to the G-protein coupled receptor 1 family.

The protein resides in the cell membrane. In terms of biological role, moderately selective excitatory receptor for orexin-A and, with a lower affinity, for orexin-B neuropeptide. Triggers an increase in cytoplasmic Ca(2+) levels in response to orexin-A binding. This is Orexin/Hypocretin receptor type 1 from Homo sapiens (Human).